Here is a 310-residue protein sequence, read N- to C-terminus: Dopamine receptor-interacting protein 1 (310 aa).

As to quaternary structure, interacts with DRD1.

Its function is as follows. Could be a regulator of the dopamine receptor signaling pathway. The polypeptide is Dopamine receptor-interacting protein 1 (Homo sapiens (Human)).